Reading from the N-terminus, the 111-residue chain is Large ribosomal subunit protein uL24 (111 aa).

The segment at 85–111 (NTNDPRRKDIINRKASRQKEEQGGKAQ) is disordered. The span at 88 to 111 (DPRRKDIINRKASRQKEEQGGKAQ) shows a compositional bias: basic and acidic residues.

Belongs to the universal ribosomal protein uL24 family. Part of the 50S ribosomal subunit.

One of two assembly initiator proteins, it binds directly to the 5'-end of the 23S rRNA, where it nucleates assembly of the 50S subunit. In terms of biological role, located at the polypeptide exit tunnel on the outside of the subunit. This Metallosphaera sedula (strain ATCC 51363 / DSM 5348 / JCM 9185 / NBRC 15509 / TH2) protein is Large ribosomal subunit protein uL24.